The primary structure comprises 128 residues: MIRTFMNSKIHRARVTESNLNYVGSITIDANILDAVDILPNEKVAIVNNNNGARFETYVIAGERGSGKMCLNGAASRLVEVGDVIIIMTYAQLNEDEMVDHSPKVAVLNENNEIIEMINEKENTISNV.

The active-site Schiff-base intermediate with substrate; via pyruvic acid is S25. A Pyruvic acid (Ser) modification is found at S25. Residue T57 participates in substrate binding. Catalysis depends on Y58, which acts as the Proton donor. Substrate is bound at residue 73-75 (GAA).

It belongs to the PanD family. As to quaternary structure, heterooctamer of four alpha and four beta subunits. Requires pyruvate as cofactor. Is synthesized initially as an inactive proenzyme, which is activated by self-cleavage at a specific serine bond to produce a beta-subunit with a hydroxyl group at its C-terminus and an alpha-subunit with a pyruvoyl group at its N-terminus.

It is found in the cytoplasm. The enzyme catalyses L-aspartate + H(+) = beta-alanine + CO2. It functions in the pathway cofactor biosynthesis; (R)-pantothenate biosynthesis; beta-alanine from L-aspartate: step 1/1. In terms of biological role, catalyzes the pyruvoyl-dependent decarboxylation of aspartate to produce beta-alanine. This chain is Aspartate 1-decarboxylase, found in Staphylococcus epidermidis (strain ATCC 35984 / DSM 28319 / BCRC 17069 / CCUG 31568 / BM 3577 / RP62A).